The sequence spans 250 residues: 5'-nucleotidase SurE (250 aa).

4 residues coordinate a divalent metal cation: Asp8, Asp9, Ser40, and Asn95.

It belongs to the SurE nucleotidase family. A divalent metal cation is required as a cofactor.

The protein resides in the cytoplasm. It catalyses the reaction a ribonucleoside 5'-phosphate + H2O = a ribonucleoside + phosphate. Nucleotidase that shows phosphatase activity on nucleoside 5'-monophosphates. The polypeptide is 5'-nucleotidase SurE (Nitratidesulfovibrio vulgaris (strain ATCC 29579 / DSM 644 / CCUG 34227 / NCIMB 8303 / VKM B-1760 / Hildenborough) (Desulfovibrio vulgaris)).